Here is a 567-residue protein sequence, read N- to C-terminus: MSKIDRKAYADMFGPTVGDRVRLADTELWIEVEKDFTIYGEEVKFGGGKVIRDGMGQSQASCADTPDTVITNALILDHWGIVKADVAIKNGRIATIGKAGNPDIQPGVTIEVGPGTEVIAGEGQILTAGGIDAHIHFICPQQIEEALTSGVTTMIGGGTGPATGTNATTCTPGPWHIQKMLQAGEAFPMNLGFLAKGNASLPTALNEQVEAGALGLKLHEDWGTTPAAIDCCLTVAENYDVQVAIHTDTLNESGFVEDTLAAFKDRTIHTYHTEGAGGGHAPDIIKACGSDNVLPSSTNPTRPYTVNTVDEHLDMLMVCHHLDPNIPEDVAFADSRIRKETIAAEDILHDLGAFSMISSDSQAMGRVGEVVCRTWQTAHKMKVQRGPLAEDSSYSDNFRARRYIAKYTINPALAHGIAHEVGSVEVGKLADLVLWKPAFFGVKPSLIIKGGAIAAAPMGDPNASIPTPQPVHYRHMFGAFGRACTGTSVSFVSQAALDAGIAASYQLERRLVAVKNCRSVKKKDMVLNHYQPVMEVDPETYEVRADGQLLTCEPAEVLPMAQRYFLF.

In terms of domain architecture, Urease spans 129 to 567 (GGIDAHIHFI…LPMAQRYFLF (439 aa)). Residues His134, His136, and Lys217 each contribute to the Ni(2+) site. The residue at position 217 (Lys217) is an N6-carboxylysine. His219 serves as a coordination point for substrate. Residues His246 and His272 each coordinate Ni(2+). His320 serves as the catalytic Proton donor. Asp360 is a binding site for Ni(2+).

The protein belongs to the metallo-dependent hydrolases superfamily. Urease alpha subunit family. Heterotrimer of UreA (gamma), UreB (beta) and UreC (alpha) subunits. Three heterotrimers associate to form the active enzyme. Requires Ni cation as cofactor. In terms of processing, carboxylation allows a single lysine to coordinate two nickel ions.

The protein resides in the cytoplasm. It catalyses the reaction urea + 2 H2O + H(+) = hydrogencarbonate + 2 NH4(+). It participates in nitrogen metabolism; urea degradation; CO(2) and NH(3) from urea (urease route): step 1/1. This is Urease subunit alpha from Teredinibacter turnerae (strain ATCC 39867 / T7901).